We begin with the raw amino-acid sequence, 483 residues long: Altronate oxidoreductase (483 aa).

An NAD(+)-binding site is contributed by 18–29 (IIQFGEGNFLRA).

Belongs to the mannitol dehydrogenase family. UxaB subfamily.

It carries out the reaction D-altronate + NAD(+) = keto-D-tagaturonate + NADH + H(+). Its pathway is carbohydrate metabolism; pentose and glucuronate interconversion. In Escherichia coli O6:K15:H31 (strain 536 / UPEC), this protein is Altronate oxidoreductase.